A 264-amino-acid chain; its full sequence is Thymidylate synthase (264 aa).

Residue arginine 21 coordinates dUMP. Histidine 51 contributes to the (6R)-5,10-methylene-5,6,7,8-tetrahydrofolate binding site. 126 to 127 (RR) is a binding site for dUMP. Catalysis depends on cysteine 146, which acts as the Nucleophile. Residues 166 to 169 (RSCD), asparagine 177, and 207 to 209 (HLY) contribute to the dUMP site. A (6R)-5,10-methylene-5,6,7,8-tetrahydrofolate-binding site is contributed by aspartate 169. Position 263 (alanine 263) interacts with (6R)-5,10-methylene-5,6,7,8-tetrahydrofolate.

This sequence belongs to the thymidylate synthase family. Bacterial-type ThyA subfamily. As to quaternary structure, homodimer.

The protein resides in the cytoplasm. It carries out the reaction dUMP + (6R)-5,10-methylene-5,6,7,8-tetrahydrofolate = 7,8-dihydrofolate + dTMP. The protein operates within pyrimidine metabolism; dTTP biosynthesis. Its function is as follows. Catalyzes the reductive methylation of 2'-deoxyuridine-5'-monophosphate (dUMP) to 2'-deoxythymidine-5'-monophosphate (dTMP) while utilizing 5,10-methylenetetrahydrofolate (mTHF) as the methyl donor and reductant in the reaction, yielding dihydrofolate (DHF) as a by-product. This enzymatic reaction provides an intracellular de novo source of dTMP, an essential precursor for DNA biosynthesis. This chain is Thymidylate synthase, found in Shewanella baltica (strain OS155 / ATCC BAA-1091).